The sequence spans 273 residues: Undecaprenyl-diphosphatase (273 aa).

7 consecutive transmembrane segments (helical) span residues 4–24 (LILI…FLPI), 43–63 (KAQV…CWEY), 82–102 (FVLN…LFIK), 108–128 (LFHP…ILWA), 183–203 (AAEF…FYDV), 217–237 (MFVV…RGFI), and 253–273 (IGFG…WSAG).

This sequence belongs to the UppP family.

Its subcellular location is the cell inner membrane. It catalyses the reaction di-trans,octa-cis-undecaprenyl diphosphate + H2O = di-trans,octa-cis-undecaprenyl phosphate + phosphate + H(+). Functionally, catalyzes the dephosphorylation of undecaprenyl diphosphate (UPP). Confers resistance to bacitracin. The polypeptide is Undecaprenyl-diphosphatase (Nitrosomonas eutropha (strain DSM 101675 / C91 / Nm57)).